A 455-amino-acid polypeptide reads, in one-letter code: Glutamate--tRNA ligase (455 aa).

Residues 8–18 (PSPTGYLHIGG) carry the 'HIGH' region motif. Positions 231–235 (RLSKR) match the 'KMSKS' region motif. Residue lysine 234 participates in ATP binding.

This sequence belongs to the class-I aminoacyl-tRNA synthetase family. Glutamate--tRNA ligase type 1 subfamily. Monomer.

It is found in the cytoplasm. The enzyme catalyses tRNA(Glu) + L-glutamate + ATP = L-glutamyl-tRNA(Glu) + AMP + diphosphate. Its function is as follows. Catalyzes the attachment of glutamate to tRNA(Glu) in a two-step reaction: glutamate is first activated by ATP to form Glu-AMP and then transferred to the acceptor end of tRNA(Glu). The polypeptide is Glutamate--tRNA ligase (Vesicomyosocius okutanii subsp. Calyptogena okutanii (strain HA)).